The following is a 248-amino-acid chain: Protein STPG4 (248 aa).

As to quaternary structure, interacts with histone H3. Interacts with histone H4.

It is found in the cytoplasm. Its subcellular location is the nucleus. In terms of biological role, maternal factor that plays a role in epigenetic chromatin reprogramming during early development of the zygote. Involved in the regulation of gametic DNA demethylation by inducing the conversion of the modified genomic base 5-methylcytosine (5mC) into 5-hydroxymethylcytosine (5hmC). This chain is Protein STPG4, found in Homo sapiens (Human).